The primary structure comprises 411 residues: Serine--tRNA ligase (411 aa).

An L-serine-binding site is contributed by 226 to 228; that stretch reads TSE. Residue 257-259 coordinates ATP; it reads RKE. Glu280 contributes to the L-serine binding site. Residue 344–347 coordinates ATP; the sequence is EISS. Residue Ser379 coordinates L-serine.

This sequence belongs to the class-II aminoacyl-tRNA synthetase family. Type-1 seryl-tRNA synthetase subfamily. Homodimer. The tRNA molecule binds across the dimer.

The protein localises to the cytoplasm. It carries out the reaction tRNA(Ser) + L-serine + ATP = L-seryl-tRNA(Ser) + AMP + diphosphate + H(+). It catalyses the reaction tRNA(Sec) + L-serine + ATP = L-seryl-tRNA(Sec) + AMP + diphosphate + H(+). The protein operates within aminoacyl-tRNA biosynthesis; selenocysteinyl-tRNA(Sec) biosynthesis; L-seryl-tRNA(Sec) from L-serine and tRNA(Sec): step 1/1. In terms of biological role, catalyzes the attachment of serine to tRNA(Ser). Is also able to aminoacylate tRNA(Sec) with serine, to form the misacylated tRNA L-seryl-tRNA(Sec), which will be further converted into selenocysteinyl-tRNA(Sec). This chain is Serine--tRNA ligase, found in Campylobacter jejuni subsp. jejuni serotype O:23/36 (strain 81-176).